The sequence spans 553 residues: MRSDTIKQGIERTPHRALIKGTGVPQSEMAKPFIGVATSFTDLIPGHVGMRDLERFIEKGIHSGGGYAFFFGIPGVCDGIAMGHKGMHYSLPTRELIADMVESVAEAHRLDGLVLLTNCDKITPGMLMAAARLDIPTIVVTAGPMMAGRGVEGRRFSFVTDTFEAMARYKAGVIDAKELQVCEDNACPGMGSCQGLFTANTMAILTETLGMSLPRCGTALAVSALKRRIAFASGEKIVDLVRNGVTPRQILTRAAFENAIRVDLALGGSSNTVLHLLAIAREAGVDLPLETFDILSKETPQIASMNPAGEYFMEDLDAAGGVVGVLKQLGGTIKDSPTVLGLTTRELASTVESVDERVIRPVSDPVKKEGGIAVLFGNLAPKGAVVKQSGVSAPMMQFEGTARCFDSEELAMAALMGGKITSGDVVVIRYEGPKGGPGMREMLAPTATLMGLGLGDSVALVTDGRFSGGTRGPCIGHISPEAAEGGPIALVEEGDRIRLDIPNRKLELLVDESILAERRSRWVAPEPKIKTGWLARYAKVVTSAYTGAVTTAE.

A Mg(2+)-binding site is contributed by D78. C119 is a binding site for [2Fe-2S] cluster. Mg(2+) contacts are provided by D120 and K121. K121 is subject to N6-carboxylysine. C193 is a [2Fe-2S] cluster binding site. E441 provides a ligand contact to Mg(2+). Residue S467 is the Proton acceptor of the active site.

It belongs to the IlvD/Edd family. In terms of assembly, homodimer. The cofactor is [2Fe-2S] cluster. Mg(2+) serves as cofactor.

The catalysed reaction is (2R)-2,3-dihydroxy-3-methylbutanoate = 3-methyl-2-oxobutanoate + H2O. The enzyme catalyses (2R,3R)-2,3-dihydroxy-3-methylpentanoate = (S)-3-methyl-2-oxopentanoate + H2O. The protein operates within amino-acid biosynthesis; L-isoleucine biosynthesis; L-isoleucine from 2-oxobutanoate: step 3/4. It participates in amino-acid biosynthesis; L-valine biosynthesis; L-valine from pyruvate: step 3/4. Functionally, functions in the biosynthesis of branched-chain amino acids. Catalyzes the dehydration of (2R,3R)-2,3-dihydroxy-3-methylpentanoate (2,3-dihydroxy-3-methylvalerate) into 2-oxo-3-methylpentanoate (2-oxo-3-methylvalerate) and of (2R)-2,3-dihydroxy-3-methylbutanoate (2,3-dihydroxyisovalerate) into 2-oxo-3-methylbutanoate (2-oxoisovalerate), the penultimate precursor to L-isoleucine and L-valine, respectively. The sequence is that of Dihydroxy-acid dehydratase from Geobacter metallireducens (strain ATCC 53774 / DSM 7210 / GS-15).